The primary structure comprises 203 residues: ATP-dependent Clp protease proteolytic subunit 2 (203 aa).

S100 acts as the Nucleophile in catalysis. The active site involves H125.

It belongs to the peptidase S14 family. As to quaternary structure, fourteen ClpP subunits assemble into 2 heptameric rings which stack back to back to give a disk-like structure with a central cavity, resembling the structure of eukaryotic proteasomes.

The protein localises to the cytoplasm. It catalyses the reaction Hydrolysis of proteins to small peptides in the presence of ATP and magnesium. alpha-casein is the usual test substrate. In the absence of ATP, only oligopeptides shorter than five residues are hydrolyzed (such as succinyl-Leu-Tyr-|-NHMec, and Leu-Tyr-Leu-|-Tyr-Trp, in which cleavage of the -Tyr-|-Leu- and -Tyr-|-Trp bonds also occurs).. Cleaves peptides in various proteins in a process that requires ATP hydrolysis. Has a chymotrypsin-like activity. Plays a major role in the degradation of misfolded proteins. This is ATP-dependent Clp protease proteolytic subunit 2 from Nocardia farcinica (strain IFM 10152).